We begin with the raw amino-acid sequence, 55 residues long: uncharacterized protein (55 aa).

The signal sequence occupies residues 1-25; sequence MKFVKAIWPFVAVAIVFMFMSAFKF.

This is an uncharacterized protein from Bacillus subtilis (strain 168).